Consider the following 460-residue polypeptide: MLTIYNTLTKSKEVFKPLDGNKVRMYVCGMTVYDYCHLGHGRSMVAFDLITRWLRFSGYDLTYVRNITDIDDKIINRANENGEAFEALTERMIAAMHEDEARLNIKKPDMEPRATDHIPGMHTMIQTLIDKGYAYAPGNGDVYYRVGKFMGYGKLSRKKIEDLRIGARIEVDESKQDPLDFVLWKAAKPGEPSWPSPWGDGRPGWHIECSVMSTCCLGETFDIHGGGSDLEFPHHENEIAQSEAATGKTYANAWMHCGMIRINGEKMSKSLNNFFTIRDVLDKYHPEVVRYLLVASHYRSAINYSEDNLKDAKGALERFYHALKGLPKVAPAGGEAFVERFTQVMNDDFGTPEACAVLFEMVREINRLRESDIDAAAGLAARLKELASVLGVLQLEADDFLQAGAEGRVDGAQVEALIQARLAARANKDWAESDRIRDQITAMGVILEDGKGGTTWRLAD.

Position 28 (C28) interacts with Zn(2+). The short motif at 30 to 40 is the 'HIGH' region element; sequence MTVYDYCHLGH. Zn(2+) contacts are provided by C209, H234, and E238. Residues 266 to 270 carry the 'KMSKS' region motif; the sequence is KMSKS. An ATP-binding site is contributed by K269.

The protein belongs to the class-I aminoacyl-tRNA synthetase family. Monomer. The cofactor is Zn(2+).

The protein localises to the cytoplasm. It carries out the reaction tRNA(Cys) + L-cysteine + ATP = L-cysteinyl-tRNA(Cys) + AMP + diphosphate. This Pseudomonas fluorescens (strain ATCC BAA-477 / NRRL B-23932 / Pf-5) protein is Cysteine--tRNA ligase.